The primary structure comprises 380 residues: O-phospho-L-seryl-tRNA:Cys-tRNA synthase (380 aa).

Pyridoxal 5'-phosphate-binding positions include 86 to 87 (AR), Asn192, and 215 to 217 (SGH). The residue at position 218 (Lys218) is an N6-(pyridoxal phosphate)lysine.

This sequence belongs to the SepCysS family. As to quaternary structure, homodimer. Interacts with SepRS. The cofactor is pyridoxal 5'-phosphate.

It carries out the reaction O-phospho-L-seryl-tRNA(Cys) + hydrogen sulfide + H(+) = L-cysteinyl-tRNA(Cys) + phosphate. In terms of biological role, converts O-phospho-L-seryl-tRNA(Cys) (Sep-tRNA(Cys)) to L-cysteinyl-tRNA(Cys) (Cys-tRNA(Cys)). This Methanococcus maripaludis (strain C5 / ATCC BAA-1333) protein is O-phospho-L-seryl-tRNA:Cys-tRNA synthase.